We begin with the raw amino-acid sequence, 213 residues long: Membrane-spanning 4-domains subfamily A member 3 (213 aa).

Topologically, residues 1 to 26 (MKPEETGGSVYQPLDESRHVQRGVLQ) are cytoplasmic. Residues 27-47 (ALGAIQILNGILILALGIFLV) traverse the membrane as a helical segment. Residues 48–58 (CLQHVSHHFRH) are Extracellular-facing. The chain crosses the membrane as a helical span at residues 59–79 (FFFFTFYTGYPLWGAVFFISS). Topologically, residues 80-97 (GSLTVAAGRNPTRMLMQN) are cytoplasmic. A helical membrane pass occupies residues 98 to 118 (SFGINIASTTIAFVGTVFLSV). The Extracellular portion of the chain corresponds to 119-148 (HLAFNTQAFKGCQSSPSPDVCISLGSSSDG). The helical transmembrane segment at 149 to 169 (LVSLMLILTLLELSVTISISA) threads the bilayer. Residues 170–213 (MWCLGNVCGLREAITSPPNSVESGILPEGSDSENLNTQPQASEE) lie on the Cytoplasmic side of the membrane. The segment at 189-213 (SVESGILPEGSDSENLNTQPQASEE) is disordered. Residues 201 to 213 (SENLNTQPQASEE) are compositionally biased toward polar residues.

It belongs to the MS4A family. In terms of assembly, interacts with CDKN3. Interacts with CDKN3-CDK2 complexes through its binding to CDKN3; this interaction facilitates dissociation of cyclin A from CDKN3-CDK2 complexes. Expressed at low levels only in specific immune tissues, such as, spleen, bone marrow and peripheral blood leukocytes.

The protein localises to the membrane. Hematopoietic modulator for the G1-S cell cycle transition. Modulates the level of phosphorylation of cyclin-dependent kinase 2 (CDK2) through its direct binding to cyclin-dependent kinase inhibitor 3 (CDKN3/KAP). The polypeptide is Membrane-spanning 4-domains subfamily A member 3 (Ms4a3) (Mus musculus (Mouse)).